A 301-amino-acid chain; its full sequence is Runt-related transcription factor rnt-1 (301 aa).

The region spanning 10–138 (NFIEQQPAPA…TVDGPRDARI (129 aa)) is the Runt domain. Interaction with DNA stretches follow at residues 40-44 (RSNKS), 95-103 (RFVGRSGRG), and 128-137 (VTVDGPRDAR). Chloride-binding residues include Arg99 and Val130. The segment at 237–301 (PSIFITPTSD…SSSPTIWRPF (65 aa)) is disordered. Residue Ser255 is modified to Phosphoserine. The segment covering 255–276 (SPRSITKSSETSINLIQETPES) has biased composition (polar residues). The segment covering 285-301 (VSITSSNSSSPTIWRPF) has biased composition (low complexity).

Interacts with CBFbeta homolog bro-1; acts to increase the affinity and specificity of interaction of rnt-1 with DNA. Interacts with TGF-beta pathway protein sma-4. Post-translationally, may be ubiquitinated in order to be targeted for proteasome-mediated degradation in intestinal cells. May be phosphorylated by members of the p38 MAP kinase pathway. As to expression, expressed in the intestine.

It is found in the nucleus. Transcription factor. Binds to regulatory DNA sequences in order to modulate transcription; negatively autoregulates its own expression, perhaps dependent upon CBF beta homolog bro-1. Promotes proliferation, and prevents differentiation, of seam cells, a stem cell-like lineage, acting in concert with bro-1. Required for controlling cell proliferation in the seam cells, perhaps by repressing expression of cyclin-dependent kinase inhibitor cki-1. Inhibition of seam cell differentiation is regulated by rnt-1 and bro-1, perhaps acting upstream of pop-1, by antagonizing pop-1 repressor function. Required for asymmetrical cell divisions in the lineage derived from a posterior embryonic seam cell, the T blast cell, and for asymmetric expression of zinc finger protein tlp-1. Regulates growth and male tail development. Involved in the oxidative stress response, perhaps downstream of the p38 MAP kinase pathway, and acting as part of a negative feedback loop via a transcriptional target gene, tyrosine-protein phosphatase vhp-1. Positively modulates dopaminergic signaling in a non-cell autonomous manner. May be involved in TGF-beta signaling. This Caenorhabditis elegans protein is Runt-related transcription factor rnt-1.